Consider the following 360-residue polypeptide: Photosystem II protein D1 (360 aa).

The next 3 helical transmembrane spans lie at 29-46 (YIGW…TATT), 118-133 (HFLL…EWEL), and 142-156 (WICV…AATA). Histidine 118 is a binding site for chlorophyll a. Residue tyrosine 126 coordinates pheophytin a. [CaMn4O5] cluster is bound by residues aspartate 170 and glutamate 189. The helical transmembrane segment at 197-218 (FHMAGVAGVFGGALFSAMHGSL) threads the bilayer. Histidine 198 provides a ligand contact to chlorophyll a. A quinone-binding positions include histidine 215 and 264–265 (SF). Histidine 215 provides a ligand contact to Fe cation. Histidine 272 serves as a coordination point for Fe cation. Residues 274 to 288 (FLGLWPVVGIWLTSI) form a helical membrane-spanning segment. Residues histidine 332, glutamate 333, aspartate 342, and alanine 344 each coordinate [CaMn4O5] cluster. A propeptide spanning residues 345–360 (DNSLLPVASSSPSINS) is cleaved from the precursor.

Belongs to the reaction center PufL/M/PsbA/D family. PSII is composed of 1 copy each of membrane proteins PsbA, PsbB, PsbC, PsbD, PsbE, PsbF, PsbH, PsbI, PsbJ, PsbK, PsbL, PsbM, PsbT, PsbY, PsbZ, Psb30/Ycf12, at least 3 peripheral proteins of the oxygen-evolving complex and a large number of cofactors. It forms dimeric complexes. It depends on The D1/D2 heterodimer binds P680, chlorophylls that are the primary electron donor of PSII, and subsequent electron acceptors. It shares a non-heme iron and each subunit binds pheophytin, quinone, additional chlorophylls, carotenoids and lipids. D1 provides most of the ligands for the Mn4-Ca-O5 cluster of the oxygen-evolving complex (OEC). There is also a Cl(-1) ion associated with D1 and D2, which is required for oxygen evolution. The PSII complex binds additional chlorophylls, carotenoids and specific lipids. as a cofactor. Post-translationally, tyr-161 forms a radical intermediate that is referred to as redox-active TyrZ, YZ or Y-Z.

Its subcellular location is the plastid. The protein resides in the chloroplast thylakoid membrane. The enzyme catalyses 2 a plastoquinone + 4 hnu + 2 H2O = 2 a plastoquinol + O2. Functionally, photosystem II (PSII) is a light-driven water:plastoquinone oxidoreductase that uses light energy to abstract electrons from H(2)O, generating O(2) and a proton gradient subsequently used for ATP formation. It consists of a core antenna complex that captures photons, and an electron transfer chain that converts photonic excitation into a charge separation. The D1/D2 (PsbA/PsbD) reaction center heterodimer binds P680, the primary electron donor of PSII as well as several subsequent electron acceptors. This chain is Photosystem II protein D1, found in Cyanidium caldarium (Red alga).